A 143-amino-acid polypeptide reads, in one-letter code: Large ribosomal subunit protein uL11 (143 aa).

Belongs to the universal ribosomal protein uL11 family. Part of the ribosomal stalk of the 50S ribosomal subunit. Interacts with L10 and the large rRNA to form the base of the stalk. L10 forms an elongated spine to which L12 dimers bind in a sequential fashion forming a multimeric L10(L12)X complex. In terms of processing, one or more lysine residues are methylated.

Forms part of the ribosomal stalk which helps the ribosome interact with GTP-bound translation factors. The sequence is that of Large ribosomal subunit protein uL11 from Clavibacter michiganensis subsp. michiganensis (strain NCPPB 382).